The following is a 127-amino-acid chain: MIYPLDLFRNIPWKQGKCFASLSPEGERAFDGMEPLCQPGARPALRGLQHASDCYRLLSPPGSGLVGTNPSVPAPSPHCGCCQAWSISSFTFTGPTPFKINSDQATPCHLRSPETIFRQREISNEAF.

This is an uncharacterized protein from Homo sapiens (Human).